A 181-amino-acid polypeptide reads, in one-letter code: MILKDSTINNYATALFNIAVKEKLVDDYIIQVDALIQSLSDKDDFNKLVSFSNKQEKQDAILIIEKTFAPFEFDIYLINALKILVENQLFINTRMILKALYKKLLDYKNIVLGVVYSTEKLTKTQLSAIKKKISNKVNKKVELVNKIDPTLIGGIKVNVQGKVFDGSIKAKLEALKKQMNT.

The protein belongs to the ATPase delta chain family. As to quaternary structure, F-type ATPases have 2 components, F(1) - the catalytic core - and F(0) - the membrane proton channel. F(1) has five subunits: alpha(3), beta(3), gamma(1), delta(1), epsilon(1). F(0) has three main subunits: a(1), b(2) and c(10-14). The alpha and beta chains form an alternating ring which encloses part of the gamma chain. F(1) is attached to F(0) by a central stalk formed by the gamma and epsilon chains, while a peripheral stalk is formed by the delta and b chains.

Its subcellular location is the cell membrane. In terms of biological role, f(1)F(0) ATP synthase produces ATP from ADP in the presence of a proton or sodium gradient. F-type ATPases consist of two structural domains, F(1) containing the extramembraneous catalytic core and F(0) containing the membrane proton channel, linked together by a central stalk and a peripheral stalk. During catalysis, ATP synthesis in the catalytic domain of F(1) is coupled via a rotary mechanism of the central stalk subunits to proton translocation. Its function is as follows. This protein is part of the stalk that links CF(0) to CF(1). It either transmits conformational changes from CF(0) to CF(1) or is implicated in proton conduction. This Mycoplasma capricolum subsp. capricolum (strain California kid / ATCC 27343 / NCTC 10154) protein is ATP synthase subunit delta.